Here is a 320-residue protein sequence, read N- to C-terminus: Chorion protein S36 (320 aa).

The first 18 residues, 1–18, serve as a signal peptide directing secretion; it reads MNCFLFTLFFVAAPLATA. 5 repeat units span residues 178–181, 258–261, 266–269, 274–277, and Ala290. A disordered region spans residues 259-320; sequence APAQSYNAAP…YGSAPPASGY (62 aa).

This sequence belongs to the chorion protein S36 family.

The protein resides in the secreted. Its function is as follows. Chorion membrane (egg shell) protein; plays a role in protecting the egg from the environment. The sequence is that of Chorion protein S36 (Cp36) from Ceratitis capitata (Mediterranean fruit fly).